Reading from the N-terminus, the 512-residue chain is Eukaryotic translation initiation factor 3 subunit L (512 aa).

The PCI domain maps to 291-477 (DAFRLFESIL…GERQFTDSVD (187 aa)).

Belongs to the eIF-3 subunit L family. In terms of assembly, component of the eukaryotic translation initiation factor 3 (eIF-3) complex.

It localises to the cytoplasm. Its function is as follows. Component of the eukaryotic translation initiation factor 3 (eIF-3) complex, which is involved in protein synthesis of a specialized repertoire of mRNAs and, together with other initiation factors, stimulates binding of mRNA and methionyl-tRNAi to the 40S ribosome. The eIF-3 complex specifically targets and initiates translation of a subset of mRNAs involved in cell proliferation. The sequence is that of Eukaryotic translation initiation factor 3 subunit L from Monosiga brevicollis (Choanoflagellate).